We begin with the raw amino-acid sequence, 640 residues long: F-box only protein 43 (640 aa).

Thr176 is subject to Phosphothreonine. Ser275 carries the phosphoserine modification. A disordered region spans residues 328–354 (LQEQGQSEDEMQTVHPNSDSGVLESLQ). In terms of domain architecture, F-box spans 423–480 (MGIEQLDILTELQYRNLKHILAMVLESLTSESLYSAWNVSRNWREIVAQDKKANRRRK). A ZBR-type zinc finger spans residues 568–616 (ALKPCPRCQSPAKYQPHKKRGLCSRLACGFDFCVLCLCAYHGSEDCRRG). Zn(2+)-binding residues include Cys572, Cys575, Cys590, Cys595, Cys600, Cys603, His608, and Cys613. The segment at 615–640 (RGSAKARGSKDVLPGSAQSKRNLKRL) is disordered.

In terms of assembly, part of a SCF (SKP1-cullin-F-box) protein ligase complex. Interaction with SKP1 does not occur. Interacts with ANAPC2; the interaction is direct, ANAPC4, CDC16, CDC23; the interaction is direct, ANAPC10; the interaction is direct and CDC26, during spermatogenesis. Interacts with CDC20. Post-translationally, phosphorylated on Thr-176 and Ser-275 in response to calcium, which is a prerequisite for ubiquitination and proteasomal degradation. In terms of processing, ubiquitinated in response to calcium, which promotes proteasomal degradation. Present in testis and ovary (at protein level). Expression is high in immature oocytes, and diminishes after oocyte activation. Expressed post-meiotically in spermatids and sperm.

It participates in protein modification; protein ubiquitination. Functionally, required to establish and maintain the arrest of oocytes at the second meiotic metaphase until fertilization. Acts by inhibiting the anaphase-promoting complex/cyclosome (APC/C) ubiquitin ligase. Probably recognizes and binds to some phosphorylated proteins and promotes their ubiquitination and degradation. Plays a vital role in modulating the ubiquitilation of CCNB1 and CDK1 during gametogenesis. The chain is F-box only protein 43 (Fbxo43) from Mus musculus (Mouse).